We begin with the raw amino-acid sequence, 202 residues long: Large ribosomal subunit protein bL17 (202 aa).

The segment at 148–202 (DEAPAAESTDAAQVEAGGVEQPDTLPDADAPATADEGVEVDAAEVDPSDEKKDQA) is disordered. The span at 169–182 (PDTLPDADAPATAD) shows a compositional bias: low complexity. A compositionally biased stretch (acidic residues) spans 183 to 194 (EGVEVDAAEVDP).

This sequence belongs to the bacterial ribosomal protein bL17 family. In terms of assembly, part of the 50S ribosomal subunit. Contacts protein L32.

This Kineococcus radiotolerans (strain ATCC BAA-149 / DSM 14245 / SRS30216) protein is Large ribosomal subunit protein bL17.